A 248-amino-acid polypeptide reads, in one-letter code: Something about silencing protein 5 (248 aa).

In terms of domain architecture, YEATS spans methionine 1–proline 139. Position 144 is a phosphoserine (serine 144). A disordered region spans residues threonine 223 to lysine 248.

As to quaternary structure, component of the SAS complex, at least composed of SAS2, SAS4 and SAS5. These three proteins constitute the core of the complex, and are sufficient to acetylate histones.

The protein resides in the nucleus. In terms of biological role, component of the SAS complex, a multiprotein complex that acetylates 'Lys-16' of histone H4 and 'Lys-14' of histone H3. The SAS complex is however unable to acetylate nucleosomal histones. The complex is involved in transcriptional silencing at telomeres and at HML locus. Also involved in rDNA silencing. In the complex, SAS5 is required for maximal histone acetyltransferase (HAT) activity of the complex, suggesting that it may be required to stabilize the complex or help in substrate recognition. The polypeptide is Something about silencing protein 5 (SAS5) (Saccharomyces cerevisiae (strain ATCC 204508 / S288c) (Baker's yeast)).